The sequence spans 362 residues: 3-dehydroquinate synthase (362 aa).

NAD(+) contacts are provided by residues 71–76 (DGEQYK), 105–109 (GVVGD), 129–130 (TT), lysine 142, lysine 151, and 169–172 (CLKT). Positions 184, 247, and 264 each coordinate Zn(2+).

This sequence belongs to the sugar phosphate cyclases superfamily. Dehydroquinate synthase family. Co(2+) serves as cofactor. Requires Zn(2+) as cofactor. It depends on NAD(+) as a cofactor.

The protein resides in the cytoplasm. It catalyses the reaction 7-phospho-2-dehydro-3-deoxy-D-arabino-heptonate = 3-dehydroquinate + phosphate. Its pathway is metabolic intermediate biosynthesis; chorismate biosynthesis; chorismate from D-erythrose 4-phosphate and phosphoenolpyruvate: step 2/7. Functionally, catalyzes the conversion of 3-deoxy-D-arabino-heptulosonate 7-phosphate (DAHP) to dehydroquinate (DHQ). This Shigella boydii serotype 18 (strain CDC 3083-94 / BS512) protein is 3-dehydroquinate synthase.